We begin with the raw amino-acid sequence, 545 residues long: Membrane protein insertase YidC (545 aa).

A helical membrane pass occupies residues 6-26 (LILFSALVLVLFLMWDAWQTD). The interval 34 to 59 (PPPPQPTASSGESSPVLPEAVPDAPP) is disordered. 3 helical membrane-spanning segments follow: residues 357-377 (LVGN…LVFF), 428-448 (GGCL…WMLL), and 505-525 (PVMF…YWVV).

Belongs to the OXA1/ALB3/YidC family. Type 1 subfamily. As to quaternary structure, interacts with the Sec translocase complex via SecD. Specifically interacts with transmembrane segments of nascent integral membrane proteins during membrane integration.

It localises to the cell inner membrane. Required for the insertion and/or proper folding and/or complex formation of integral membrane proteins into the membrane. Involved in integration of membrane proteins that insert both dependently and independently of the Sec translocase complex, as well as at least some lipoproteins. Aids folding of multispanning membrane proteins. The polypeptide is Membrane protein insertase YidC (Nitrosococcus oceani (strain ATCC 19707 / BCRC 17464 / JCM 30415 / NCIMB 11848 / C-107)).